Reading from the N-terminus, the 361-residue chain is RNA 3'-terminal phosphate cyclase (361 aa).

6 residues coordinate ATP: Q105, P132, Y295, D298, Q299, and H321. Catalysis depends on H321, which acts as the Tele-AMP-histidine intermediate.

Belongs to the RNA 3'-terminal cyclase family. Type 1 subfamily.

The protein localises to the nucleus. The protein resides in the nucleoplasm. It catalyses the reaction a 3'-end 3'-phospho-ribonucleotide-RNA + ATP = a 3'-end 2',3'-cyclophospho-ribonucleotide-RNA + AMP + diphosphate. Catalyzes the conversion of 3'-phosphate to a 2',3'-cyclic phosphodiester at the end of RNA. The mechanism of action of the enzyme occurs in 3 steps: (A) adenylation of the enzyme by ATP; (B) transfer of adenylate to an RNA-N3'P to produce RNA-N3'PP5'A; (C) and attack of the adjacent 2'-hydroxyl on the 3'-phosphorus in the diester linkage to produce the cyclic end product. Likely functions in some aspects of cellular RNA processing. Function plays an important role in a RNA repair and splicing pathway which controls axon regeneration in response to peripheral (PNS) and central nervous system (CNS) injury. In response to axotomy, negatively regulates splicing of Xbp1 which in turn activates downstream effectors which inhibit axon regeneration, including down-regulating the microtubule regulators ringer and futsch. The polypeptide is RNA 3'-terminal phosphate cyclase (Drosophila melanogaster (Fruit fly)).